A 202-amino-acid polypeptide reads, in one-letter code: GMP synthase [glutamine-hydrolyzing] subunit A (202 aa).

A Glutamine amidotransferase type-1 domain is found at 4–194 (KIYVVDNGGQ…IAICQQHKEK (191 aa)). Catalysis depends on Cys-81, which acts as the Nucleophile. Active-site residues include His-168 and Glu-170.

Heterodimer composed of a glutamine amidotransferase subunit (A) and a GMP-binding subunit (B).

The catalysed reaction is XMP + L-glutamine + ATP + H2O = GMP + L-glutamate + AMP + diphosphate + 2 H(+). It participates in purine metabolism; GMP biosynthesis; GMP from XMP (L-Gln route): step 1/1. In terms of biological role, catalyzes the synthesis of GMP from XMP. The chain is GMP synthase [glutamine-hydrolyzing] subunit A from Thermoplasma volcanium (strain ATCC 51530 / DSM 4299 / JCM 9571 / NBRC 15438 / GSS1).